Reading from the N-terminus, the 3189-residue chain is Beauvericin nonribosomal cyclodepsipeptide synthetase (3189 aa).

The condensation 1 stretch occupies residues 73–466; it reads HAMYEISQHV…EQLQSAADDA (394 aa). The disordered stretch occupies residues 202 to 223; the sequence is DSLPLTPDSSGGSDSDSPSTLK. Over residues 208–220 the composition is skewed to low complexity; sequence PDSSGGSDSDSPS. Positions 507 to 901 are adenylation 1; it reads AESPSDPAVL…GRIDSQVKIR (395 aa). The region spanning 1036–1112 is the Carrier 1 domain; sequence TLETGPEARL…RLQAVMSGDS (77 aa). At Ser1073 the chain carries O-(pantetheine 4'-phosphoryl)serine. Residues 1136–1569 are condensation 2; it reads SYSQGRLWFL…KSLISVLPLT (434 aa). The segment at 1599–2004 is adenylation 2; that stretch reads FRSQVATCPD…GRMDFQFKIR (406 aa). An S-adenosyl-L-methionine-dependent N-methyltransferase region spans residues 2072–2211; sequence MYNGIDAISP…FPTVEYLTRV (140 aa). 2 Carrier domains span residues 2557–2631 and 2654–2728; these read CPIS…REGL and APRN…ELGQ. 2 positions are modified to O-(pantetheine 4'-phosphoryl)serine: Ser2591 and Ser2688. Positions 2773 to 3181 are condensation 3; the sequence is QDVYPATHMQ…AYLMEEVCRL (409 aa).

Belongs to the NRP synthetase family.

It catalyses the reaction 3 (R)-2-hydroxy-3-methylbutanoate + 3 L-phenylalanine + 3 S-adenosyl-L-methionine + 6 ATP = beauvericin + 6 AMP + 3 S-adenosyl-L-homocysteine + 6 diphosphate + 6 H(+). In terms of biological role, beauvericin nonribosomal cyclodepsipeptide synthetase; part of the gene cluster that mediates the biosynthesis of beauvericin (BEA), a non-ribosomal cyclic hexadepsipeptide that shows antibiotic, antifungal, insecticidal, and cancer cell antiproliferative and antihaptotactic activity. Ketoisovalerate reductase BEA2 catalyzes the NADPH-specific reduction of ketoisovaleric acid to hydroxyisovalerate, a precursor for beauvericin biosynthesis. The nonribosomal cyclodepsipeptide synthetase BEA1 then catalyzes the formation of beauvericin via condensation and cyclization of 3 dipeptidol monomers, each composed of one unit of hydroxyisovalerate and one unit of N-methyl-phenylalanine. The chain is Beauvericin nonribosomal cyclodepsipeptide synthetase (Beas) from Beauveria bassiana (White muscardine disease fungus).